The sequence spans 352 residues: MPRLLIAASGTGGHIYPALSFADSLSNSWEIVWLGVPHRLEVELVPEKYNLIKLKVGGLQGNSFRKLFNLCKLLFASVQVSVLLRQKKINVIFTTGGYISAPSILGAKMAGIPVLLHESNAIPGKVTRLLGRFCDHVALGIPSASEYLQRCRTSFTGTPVRTEFLLEKSLPSWVPLGEGVLIVVMGGSQGAIKMNEMVRKILPCLIEKGCRVVHLTGKNDCFYRNRDQEKNHPNLVVRDFSDEIPALLRNADLAISRSGAGAICELMVTKTPSILIPFPSSTDQHQELNAAYMARFGGAIIVNQHDPEKNILKNIVSNLLDSNSLREMKLNMNNHDYSYPEKKIFEIIHSIS.

Residues 11-13 (TGG), Asn120, Arg161, Ser188, and Gln286 contribute to the UDP-N-acetyl-alpha-D-glucosamine site.

Belongs to the glycosyltransferase 28 family. MurG subfamily.

It localises to the cell inner membrane. It carries out the reaction di-trans,octa-cis-undecaprenyl diphospho-N-acetyl-alpha-D-muramoyl-L-alanyl-D-glutamyl-meso-2,6-diaminopimeloyl-D-alanyl-D-alanine + UDP-N-acetyl-alpha-D-glucosamine = di-trans,octa-cis-undecaprenyl diphospho-[N-acetyl-alpha-D-glucosaminyl-(1-&gt;4)]-N-acetyl-alpha-D-muramoyl-L-alanyl-D-glutamyl-meso-2,6-diaminopimeloyl-D-alanyl-D-alanine + UDP + H(+). It participates in cell wall biogenesis; peptidoglycan biosynthesis. Cell wall formation. Catalyzes the transfer of a GlcNAc subunit on undecaprenyl-pyrophosphoryl-MurNAc-pentapeptide (lipid intermediate I) to form undecaprenyl-pyrophosphoryl-MurNAc-(pentapeptide)GlcNAc (lipid intermediate II). The polypeptide is UDP-N-acetylglucosamine--N-acetylmuramyl-(pentapeptide) pyrophosphoryl-undecaprenol N-acetylglucosamine transferase (Prochlorococcus marinus (strain NATL2A)).